A 759-amino-acid polypeptide reads, in one-letter code: Cullin-4A (759 aa).

Lys8 is covalently cross-linked (Glycyl lysine isopeptide (Lys-Gly) (interchain with G-Cter in SUMO2)). At Ser10 the chain carries Phosphoserine. A Glycyl lysine isopeptide (Lys-Gly) (interchain with G-Cter in ubiquitin) cross-link involves residue Lys33. Residues 691-751 enclose the Cullin neddylation domain; the sequence is DRQYQIDAAI…RDYMERDKDN (61 aa). Lys705 is covalently cross-linked (Glycyl lysine isopeptide (Lys-Gly) (interchain with G-Cter in NEDD8)).

It belongs to the cullin family. Can self-associate. Component of multiple DCX (DDB1-CUL4-X-box) E3 ubiquitin-protein ligase complexes that seem to consist of DDB1, CUL4A or CUL4B, RBX1 and a variable substrate recognition component which seems to belong to a protein family described as DCAF (Ddb1- and Cul4-associated factor) or CDW (CUL4-DDB1-associated WD40-repeat) proteins. Component of the CSA complex (DCX(ERCC8) complex) containing ERCC8, RBX1, DDB1 and CUL4A; the CSA complex interacts with RNA polymerase II; upon UV irradiation it interacts with the COP9 signalosome and preferentially with the hyperphosphorylated form of RNA polymerase II. Component of the DCX(DET1-COP1) complex with the substrate recognition component DET1 and COP1. Component of the DCX(DDB2) complex with the substrate recognition component DDB2. Component of the DCX(DTL) complex with the putative substrate recognition component DTL. Component of DCX complexes part of the DesCEND (destruction via C-end degrons) pathway, which contain either TRPC4AP or DCAF12 as substrate-recognition component. Component of the DCX(AMBRA1) complex with the substrate recognition component AMBRA1. Interacts with DDB1, RBX1, RNF7, CDT1, TIP120A/CAND1, SKP2, CDKN1B, MDM2, TP53 and HOXA9. Interacts with DDB2; the interactions with DDB2 and CAND1 are mutually exclusive. Interacts with DCAF1, DTL, DDA1, DCAF6, DCAF4, DCAF16, DCAF17, DET1, WDTC1, DCAF5, DCAF11, WDR24A, COP1, PAFAH1B1, ERCC8, GRWD1, FBXW5, RBBP7, GNB2, WSB1, WSB2, NUP43, PWP1, FBXW8, ATG16L1, KATNB1, RBBP4, RBBP5, LRWD1 and DCAF8. May interact with WDR26, WDR51B, SNRNP40, WDR61, WDR76, WDR5. Interacts (when neddylated) with ARIH1; leading to activate the E3 ligase activity of ARIH1. The DDB1-CUL4A complex interacts with CRY1. Interacts (unneddylated form) with DCUN1D1, DCUN1D2, DCUN1D3, DCUN1D4 and DCUN1D5; these interactions promote the cullin neddylation. As to quaternary structure, (Microbial infection) Interacts with Epstein-Barr virus BPLF1. Neddylated; required for activity of cullin-RING-based E3 ubiquitin-protein ligase complexes. Deneddylated via its interaction with the COP9 signalosome (CSN) complex. In terms of processing, (Microbial infection) Deneddylated by Epstein-Barr virus BPLF1 leading to a S-phase-like environment that is required for efficient replication of the viral genome.

It participates in protein modification; protein ubiquitination. Functionally, core component of multiple cullin-RING-based E3 ubiquitin-protein ligase complexes which mediate the ubiquitination of target proteins. As a scaffold protein may contribute to catalysis through positioning of the substrate and the ubiquitin-conjugating enzyme. The E3 ubiquitin-protein ligase activity of the complex is dependent on the neddylation of the cullin subunit and is inhibited by the association of the deneddylated cullin subunit with TIP120A/CAND1. The functional specificity of the E3 ubiquitin-protein ligase complex depends on the variable substrate recognition component. DCX(DET1-COP1) directs ubiquitination of JUN. DCX(DDB2) directs ubiquitination of XPC. DCX(DDB2) ubiquitinates histones H3-H4 and is required for efficient histone deposition during replication-coupled (H3.1) and replication-independent (H3.3) nucleosome assembly, probably by facilitating the transfer of H3 from ASF1A/ASF1B to other chaperones involved in histone deposition. DCX(DTL) plays a role in PCNA-dependent polyubiquitination of CDT1 and MDM2-dependent ubiquitination of p53/TP53 in response to radiation-induced DNA damage and during DNA replication. DCX(DTL) directs autoubiquitination of DTL. In association with DDB1 and SKP2 probably is involved in ubiquitination of CDKN1B/p27kip. Is involved in ubiquitination of HOXA9. The DDB1-CUL4A-DTL E3 ligase complex regulates the circadian clock function by mediating the ubiquitination and degradation of CRY1. The DCX(ERCC8) complex (also named CSA complex) plays a role in transcription-coupled repair (TCR). A number of DCX complexes (containing either TRPC4AP or DCAF12 as substrate-recognition component) are part of the DesCEND (destruction via C-end degrons) pathway, which recognizes a C-degron located at the extreme C terminus of target proteins, leading to their ubiquitination and degradation. The DCX(AMBRA1) complex is a master regulator of the transition from G1 to S cell phase by mediating ubiquitination of phosphorylated cyclin-D (CCND1, CCND2 and CCND3). The DCX(AMBRA1) complex also acts as a regulator of Cul5-RING (CRL5) E3 ubiquitin-protein ligase complexes by mediating ubiquitination and degradation of Elongin-C (ELOC) component of CRL5 complexes. With CUL4B, contributes to ribosome biogenesis. This Homo sapiens (Human) protein is Cullin-4A.